The chain runs to 635 residues: 1-deoxy-D-xylulose-5-phosphate synthase (635 aa).

Thiamine diphosphate-binding positions include H74 and 115-117; that span reads GHA. D146 serves as a coordination point for Mg(2+). Residues 147–148, N175, Y285, and E367 contribute to the thiamine diphosphate site; that span reads GA. Residue N175 participates in Mg(2+) binding.

The protein belongs to the transketolase family. DXPS subfamily. Homodimer. The cofactor is Mg(2+). Requires thiamine diphosphate as cofactor.

The enzyme catalyses D-glyceraldehyde 3-phosphate + pyruvate + H(+) = 1-deoxy-D-xylulose 5-phosphate + CO2. It functions in the pathway metabolic intermediate biosynthesis; 1-deoxy-D-xylulose 5-phosphate biosynthesis; 1-deoxy-D-xylulose 5-phosphate from D-glyceraldehyde 3-phosphate and pyruvate: step 1/1. Functionally, catalyzes the acyloin condensation reaction between C atoms 2 and 3 of pyruvate and glyceraldehyde 3-phosphate to yield 1-deoxy-D-xylulose-5-phosphate (DXP). In Anaeromyxobacter sp. (strain Fw109-5), this protein is 1-deoxy-D-xylulose-5-phosphate synthase.